We begin with the raw amino-acid sequence, 298 residues long: MAASTMSVCSSAYSDSWQVDDCPESCCEPPCSAPSCCAPAPSLSLVCTPVSCVSSPCCQAACEPSACQSGCTSSCTPSCCQQSSCQPACCTSSPCQQACCVPVCCKTVCCKPVCCVPVCCGAASSCCRQSSCQPACCASSSCQPACCVPVCCKPVCCVSTCSEDSSSCCQQSSCQPACCTSSSYQQACCVPVCCKTVYCKPICCVPVCSRASSSRCQQPSCQPACCTTSCCRPSSSVSLLCHPVCRSTCCVPVSSCCAPTSSCQSSCCRPASCVSLLCRPASSRLACYSLCSGKKSSC.

Tandem repeats lie at residues 26–30 (CCEPP), 36–40 (CCAPA), 57–61 (CCQAA), 79–83 (CCQQS), 89–93 (CCTSS), 99–103 (CCVPV), 104–108 (CCKTV), 109–113 (CCKPV), 114–118 (CCVPV), 119–123 (CCGAA), 126–130 (CCRQS), 136–140 (CCASS), 146–150 (CCVPV), 151–155 (CCKPV), 156–160 (CCVST), 168–172 (CCQQS), 178–182 (CCTSS), 188–192 (CCVPV), 193–197 (CCKTV), 203–207 (CCVPV), 225–229 (CCTTS), 230–234 (CCRPS), 249–253 (CCVPV), 256–260 (CCAPT), and 267–271 (CCRPA). Residues 26 to 271 (CCEPPCSAPS…SCQSSCCRPA (246 aa)) are 25 X 5 AA repeats of C-C-X(3).

This sequence belongs to the KRTAP type 10 family. Interacts with hair keratins. As to expression, restricted to a narrow region of the hair fiber cuticle, lying approximately 20 cell layers above the apex of the dermal papilla of the hair root; not detected in any other tissues.

Functionally, in the hair cortex, hair keratin intermediate filaments are embedded in an interfilamentous matrix, consisting of hair keratin-associated proteins (KRTAP), which are essential for the formation of a rigid and resistant hair shaft through their extensive disulfide bond cross-linking with abundant cysteine residues of hair keratins. The matrix proteins include the high-sulfur and high-glycine-tyrosine keratins. The polypeptide is Keratin-associated protein 10-11 (KRTAP10-11) (Homo sapiens (Human)).